The following is a 242-amino-acid chain: B-box zinc finger protein 20 (242 aa).

Residues Cys-5, Cys-8, Cys-28, His-33, Cys-58, Cys-61, Cys-81, and His-91 each coordinate Zn(2+). The segment at 5-47 adopts a B box-type 1; atypical zinc-finger fold; it reads CAVCDKEEASVFCCADEAALCNGCDRHVHFANKLAGKHLRFSL. The B box-type 2; atypical zinc finger occupies 58 to 100; sequence CDICGERRALLFCQEDRAILCRECDIPIHQANEHTKKHNRFLL. The tract at residues 112–153 is disordered; it reads YPRASNSNSAAAFGRAKTRPKSVSSEVPSSASNEVFTSSSST. Residues 133 to 153 show a composition bias toward low complexity; it reads SVSSEVPSSASNEVFTSSSST.

In terms of assembly, interacts with MED25 and COP1. Post-translationally, COP1-mediated ubiquitination and subsequent proteasomal degradation of BBX20 occurs in the dark.

The protein resides in the nucleus. In terms of biological role, acts as a positive regulator of seedling photomorphogenesis. Plays a negative role in brassinosteroid responses. The sequence is that of B-box zinc finger protein 20 from Arabidopsis thaliana (Mouse-ear cress).